The primary structure comprises 175 residues: Disulfide bond formation protein B 2 (175 aa).

The Cytoplasmic portion of the chain corresponds to 1–9; sequence MYLARTRFL. Residues 10–26 traverse the membrane as a helical segment; it reads FFLASLACASIIGTAFY. At 27 to 44 the chain is on the periplasmic side; the sequence is LQQTFGLDPCFLCLIQRA. Cysteines 36 and 39 form a disulfide. Residues 45–61 traverse the membrane as a helical segment; sequence AIIACGVLALCAACHAP. The Cytoplasmic portion of the chain corresponds to 62–68; the sequence is GPTGMRR. A helical transmembrane segment spans residues 69-85; that stretch reads YSLGFLLIALTGLVTAG. The Periplasmic portion of the chain corresponds to 86-142; the sequence is AQVWLQTASADQLIPFITKLEHLLSLLSLDMCIDRLRSDAMFCAEITWTLFGISLPE. Residues 143-161 form a helical membrane-spanning segment; it reads WSLLAFTGLALLPLYPLFS. The Cytoplasmic portion of the chain corresponds to 162 to 175; it reads EFSHWLATKDRARY.

The protein belongs to the DsbB family.

The protein localises to the cell inner membrane. In terms of biological role, required for disulfide bond formation in some periplasmic proteins. Acts by oxidizing the DsbA protein. The polypeptide is Disulfide bond formation protein B 2 (Pseudomonas savastanoi pv. phaseolicola (strain 1448A / Race 6) (Pseudomonas syringae pv. phaseolicola (strain 1448A / Race 6))).